Reading from the N-terminus, the 326-residue chain is MSFSDRNDSPETPESSGTGTPVNSNRASASYITNMWTGLIRRFSSEGSFPSQADTAYDDNFNYHDGNGHNTKDGINGVFSPVRRTASPMRPPPLDPLILHGYRQGTPSSAKLLSAAVAEEIRTMVPERLRIVDDWNLIYSLEQDGASLATLYQRCRQFEGKRAGFVLVVKDLEGGVFGAYLSEYPHPAHTYFGNGECFLWRASNITPLPPPPSADTTNLNSRNTTLAPPPPSSEANTPTHSRPASPTPSEAVRFKAFPYSGLNDFCINCETGFLSVGSGGGHYGLWLDNGLEVGHSSRCETYGNEPLSDEGTKFGVIGVELWVMGV.

Disordered stretches follow at residues 1–26 and 209–249; these read MSFS…NSNR and PPPP…PTPS. Polar residues-rich tracts occupy residues 10–26, 214–226, and 233–248; these read PETP…NSNR, ADTT…NTTL, and SEAN…SPTP. Positions 111–325 constitute a TLDc domain; it reads KLLSAAVAEE…VIGVELWVMG (215 aa).

It belongs to the OXR1 family.

It is found in the mitochondrion. Functionally, may be involved in protection from oxidative damage. The polypeptide is Oxidation resistance protein 1 (OXR1) (Gibberella zeae (strain ATCC MYA-4620 / CBS 123657 / FGSC 9075 / NRRL 31084 / PH-1) (Wheat head blight fungus)).